The sequence spans 374 residues: Ribosomal RNA large subunit methyltransferase G (374 aa).

Belongs to the methyltransferase superfamily. RlmG family.

It localises to the cytoplasm. The enzyme catalyses guanosine(1835) in 23S rRNA + S-adenosyl-L-methionine = N(2)-methylguanosine(1835) in 23S rRNA + S-adenosyl-L-homocysteine + H(+). Specifically methylates the guanine in position 1835 (m2G1835) of 23S rRNA. This Pseudomonas putida (strain W619) protein is Ribosomal RNA large subunit methyltransferase G.